The sequence spans 243 residues: 3,4-dihydroxyphthalate decarboxylase (243 aa).

Glu-86 functions as the Proton donor/acceptor in the catalytic mechanism. A divalent metal cation-binding residues include Glu-86, His-105, His-107, and His-173.

This sequence belongs to the aldolase class II family. A divalent metal cation serves as cofactor.

It carries out the reaction 3,4-dihydroxyphthalate + H(+) = 3,4-dihydroxybenzoate + CO2. Its pathway is xenobiotic degradation; phthalate degradation. Its function is as follows. Catalyzes the decarboxylation of 3,4-dihydroxyphthalate to protocatechuate (3,4-dihydroxybenzoate) during phthalate metabolism. In Rhodococcus jostii (strain RHA1), this protein is 3,4-dihydroxyphthalate decarboxylase.